A 1384-amino-acid polypeptide reads, in one-letter code: DNA-directed RNA polymerase subunit beta (1384 aa).

It belongs to the RNA polymerase beta chain family. The RNAP catalytic core consists of 2 alpha, 1 beta, 1 beta' and 1 omega subunit. When a sigma factor is associated with the core the holoenzyme is formed, which can initiate transcription.

The catalysed reaction is RNA(n) + a ribonucleoside 5'-triphosphate = RNA(n+1) + diphosphate. Functionally, DNA-dependent RNA polymerase catalyzes the transcription of DNA into RNA using the four ribonucleoside triphosphates as substrates. This Xylella fastidiosa (strain M12) protein is DNA-directed RNA polymerase subunit beta.